A 208-amino-acid polypeptide reads, in one-letter code: Outer-membrane lipoprotein carrier protein (208 aa).

The signal sequence occupies residues 1–22 (MLKPLSQLVCALPLVVAASSYA).

This sequence belongs to the LolA family. In terms of assembly, monomer.

The protein localises to the periplasm. Its function is as follows. Participates in the translocation of lipoproteins from the inner membrane to the outer membrane. Only forms a complex with a lipoprotein if the residue after the N-terminal Cys is not an aspartate (The Asp acts as a targeting signal to indicate that the lipoprotein should stay in the inner membrane). The sequence is that of Outer-membrane lipoprotein carrier protein from Shewanella loihica (strain ATCC BAA-1088 / PV-4).